A 414-amino-acid polypeptide reads, in one-letter code: Glucose-1-phosphate adenylyltransferase (414 aa).

Residues Y99, G164, 181–182 (EK), and S199 each bind alpha-D-glucose 1-phosphate.

This sequence belongs to the bacterial/plant glucose-1-phosphate adenylyltransferase family. Homotetramer.

It carries out the reaction alpha-D-glucose 1-phosphate + ATP + H(+) = ADP-alpha-D-glucose + diphosphate. The protein operates within glycan biosynthesis; glycogen biosynthesis. Its function is as follows. Involved in the biosynthesis of ADP-glucose, a building block required for the elongation reactions to produce glycogen. Catalyzes the reaction between ATP and alpha-D-glucose 1-phosphate (G1P) to produce pyrophosphate and ADP-Glc. The polypeptide is Glucose-1-phosphate adenylyltransferase (Bifidobacterium adolescentis (strain ATCC 15703 / DSM 20083 / NCTC 11814 / E194a)).